Here is a 370-residue protein sequence, read N- to C-terminus: 3-dehydroquinate synthase (370 aa).

NAD(+)-binding positions include 108-112, 132-133, lysine 145, and lysine 154; these read GVVGD and TT. Zn(2+) is bound by residues glutamate 187, histidine 250, and histidine 268.

This sequence belongs to the sugar phosphate cyclases superfamily. Dehydroquinate synthase family. Requires Co(2+) as cofactor. It depends on Zn(2+) as a cofactor. The cofactor is NAD(+).

Its subcellular location is the cytoplasm. The catalysed reaction is 7-phospho-2-dehydro-3-deoxy-D-arabino-heptonate = 3-dehydroquinate + phosphate. It functions in the pathway metabolic intermediate biosynthesis; chorismate biosynthesis; chorismate from D-erythrose 4-phosphate and phosphoenolpyruvate: step 2/7. Functionally, catalyzes the conversion of 3-deoxy-D-arabino-heptulosonate 7-phosphate (DAHP) to dehydroquinate (DHQ). This Caulobacter vibrioides (strain NA1000 / CB15N) (Caulobacter crescentus) protein is 3-dehydroquinate synthase.